The chain runs to 277 residues: Tryptophan synthase alpha chain (277 aa).

Catalysis depends on proton acceptor residues Glu-59 and Asp-70.

Belongs to the TrpA family. In terms of assembly, tetramer of two alpha and two beta chains.

It carries out the reaction (1S,2R)-1-C-(indol-3-yl)glycerol 3-phosphate + L-serine = D-glyceraldehyde 3-phosphate + L-tryptophan + H2O. Its pathway is amino-acid biosynthesis; L-tryptophan biosynthesis; L-tryptophan from chorismate: step 5/5. The alpha subunit is responsible for the aldol cleavage of indoleglycerol phosphate to indole and glyceraldehyde 3-phosphate. This is Tryptophan synthase alpha chain from Streptomyces avermitilis (strain ATCC 31267 / DSM 46492 / JCM 5070 / NBRC 14893 / NCIMB 12804 / NRRL 8165 / MA-4680).